A 722-amino-acid polypeptide reads, in one-letter code: Peroxisomal bifunctional enzyme (722 aa).

Residues 1–281 (MAEYLRLPHS…FAEKSANKWS (281 aa)) are enoyl-CoA hydratase / isomerase. A2 carries the post-translational modification Blocked amino end (Ala). K38 carries the post-translational modification N6-succinyllysine. Residue G100 participates in substrate binding. At K173 the chain carries N6-acetyllysine; alternate. Residue K173 is modified to N6-succinyllysine; alternate. Residue K182 is modified to N6-succinyllysine. N6-acetyllysine; alternate occurs at positions 190 and 218. 2 positions are modified to N6-succinyllysine; alternate: K190 and K218. At K241 the chain carries N6-succinyllysine. K249 carries the N6-acetyllysine modification. An N6-succinyllysine modification is found at K253. Position 275 is an N6-acetyllysine; alternate (K275). K275 carries the post-translational modification N6-succinyllysine; alternate. 3 positions are modified to N6-succinyllysine: K279, K289, and K330. Residues 282–571 (TPSGASWKTA…DMLCEAGRFG (290 aa)) are 3-hydroxyacyl-CoA dehydrogenase. K345, K359, and K463 each carry N6-acetyllysine. Position 531 is an N6-succinyllysine (K531). Position 547 is a phosphothreonine (T547). K576 is subject to N6-succinyllysine. N6-acetyllysine; alternate occurs at positions 583, 590, and 709. Residues K583, K590, and K709 each carry the N6-succinyllysine; alternate modification. The short motif at 720–722 (SKL) is the Microbody targeting signal element. N6-succinyllysine is present on K721.

In the N-terminal section; belongs to the enoyl-CoA hydratase/isomerase family. It in the C-terminal section; belongs to the 3-hydroxyacyl-CoA dehydrogenase family. As to quaternary structure, monomer. Post-translationally, acetylated, leading to enhanced enzyme activity. Acetylation is enhanced by up to 80% after treatment either with trichostin A (TCA) or with nicotinamide (NAM) with highest increase on Lys-345. Acetylation and enzyme activity increased by about 1.5% on addition of fatty acids.

Its subcellular location is the peroxisome. The catalysed reaction is a (3S)-3-hydroxyacyl-CoA = a (2E)-enoyl-CoA + H2O. The enzyme catalyses a 4-saturated-(3S)-3-hydroxyacyl-CoA = a (3E)-enoyl-CoA + H2O. It carries out the reaction a (3Z)-enoyl-CoA = a 4-saturated (2E)-enoyl-CoA. It catalyses the reaction a (3E)-enoyl-CoA = a 4-saturated (2E)-enoyl-CoA. The catalysed reaction is a (3S)-3-hydroxyacyl-CoA + NAD(+) = a 3-oxoacyl-CoA + NADH + H(+). The enzyme catalyses (2S,3S)-3-hydroxy-2-methylbutanoyl-CoA = (2E)-2-methylbut-2-enoyl-CoA + H2O. It carries out the reaction (3E,5Z)-tetradecadienoyl-CoA = (2E,5Z)-tetradecadienoyl-CoA. It catalyses the reaction (3E,5Z)-octadienoyl-CoA = (2E,5Z)-octadienoyl-CoA. The catalysed reaction is (3S)-hydroxydecanoyl-CoA + NAD(+) = 3-oxodecanoyl-CoA + NADH + H(+). The enzyme catalyses (3E)-decenoyl-CoA = (2E)-decenoyl-CoA. It carries out the reaction (3Z)-hexenoyl-CoA = (2E)-hexenoyl-CoA. It catalyses the reaction (3E)-hexenoyl-CoA = (2E)-hexenoyl-CoA. The catalysed reaction is (3S)-hydroxydecanoyl-CoA = (2E)-decenoyl-CoA + H2O. The enzyme catalyses (3S)-hydroxyhexanoyl-CoA = (2E)-hexenoyl-CoA + H2O. It carries out the reaction (3S)-hydroxyhexadecanoyl-CoA + NAD(+) = 3-oxohexadecanoyl-CoA + NADH + H(+). It catalyses the reaction (3S)-hydroxyhexadecanoyl-CoA = (2E)-hexadecenoyl-CoA + H2O. The catalysed reaction is (2E)-hexadecenedioyl-CoA + H2O = (3S)-hydroxyhexadecanedioyl-CoA. The enzyme catalyses (3S)-hydroxyhexadecanedioyl-CoA + NAD(+) = 3-oxohexadecanedioyl-CoA + NADH + H(+). It functions in the pathway lipid metabolism; fatty acid beta-oxidation. Its activity is regulated as follows. Enzyme activity enhanced by acetylation. Peroxisomal trifunctional enzyme possessing 2-enoyl-CoA hydratase, 3-hydroxyacyl-CoA dehydrogenase, and delta 3, delta 2-enoyl-CoA isomerase activities. Catalyzes two of the four reactions of the long chain fatty acids peroxisomal beta-oxidation pathway. Can also use branched-chain fatty acids such as 2-methyl-2E-butenoyl-CoA as a substrate, which is hydrated into (2S,3S)-3-hydroxy-2-methylbutanoyl-CoA. Optimal isomerase for 2,5 double bonds into 3,5 form isomerization in a range of enoyl-CoA species. Also able to isomerize both 3-cis and 3-trans double bonds into the 2-trans form in a range of enoyl-CoA species. Regulates the amount of medium-chain dicarboxylic fatty acids which are essential regulators of all fatty acid oxidation pathways. Also involved in the degradation of long-chain dicarboxylic acids through peroxisomal beta-oxidation. The polypeptide is Peroxisomal bifunctional enzyme (Rattus norvegicus (Rat)).